Reading from the N-terminus, the 510-residue chain is GTPase Der (510 aa).

EngA-type G domains lie at 3–167 (LKLA…GPEA) and 230–405 (IRLA…KDWT). Residues 9–16 (GRPNVGKS), 56–60 (DTAGF), 119–122 (NKAE), 236–243 (GRPNAGKS), 283–287 (DTAGL), and 348–351 (SKWD) each bind GTP. One can recognise a KH-like domain in the interval 406–490 (ARAKTGDLNR…PIRLFVRQGK (85 aa)).

It belongs to the TRAFAC class TrmE-Era-EngA-EngB-Septin-like GTPase superfamily. EngA (Der) GTPase family. In terms of assembly, associates with the 50S ribosomal subunit.

GTPase that plays an essential role in the late steps of ribosome biogenesis. This is GTPase Der from Hyphomonas neptunium (strain ATCC 15444).